A 306-amino-acid polypeptide reads, in one-letter code: Bifunctional protein FolD 1 (306 aa).

Residues 170–172 (GRG), T199, and V240 each bind NADP(+). Residues 285 to 306 (ARRTRSSRTPVRLPDSGAPAGR) are disordered.

It belongs to the tetrahydrofolate dehydrogenase/cyclohydrolase family. In terms of assembly, homodimer.

The enzyme catalyses (6R)-5,10-methylene-5,6,7,8-tetrahydrofolate + NADP(+) = (6R)-5,10-methenyltetrahydrofolate + NADPH. The catalysed reaction is (6R)-5,10-methenyltetrahydrofolate + H2O = (6R)-10-formyltetrahydrofolate + H(+). It participates in one-carbon metabolism; tetrahydrofolate interconversion. In terms of biological role, catalyzes the oxidation of 5,10-methylenetetrahydrofolate to 5,10-methenyltetrahydrofolate and then the hydrolysis of 5,10-methenyltetrahydrofolate to 10-formyltetrahydrofolate. The protein is Bifunctional protein FolD 1 of Salinispora tropica (strain ATCC BAA-916 / DSM 44818 / JCM 13857 / NBRC 105044 / CNB-440).